Consider the following 394-residue polypeptide: Dual-specificity RNA methyltransferase RlmN (394 aa).

The active-site Proton acceptor is the Glu-116. Residues 122 to 365 (EEDRGTLCVS…SPIRTPRGED (244 aa)) form the Radical SAM core domain. Cys-129 and Cys-370 form a disulfide bridge. Cys-136, Cys-140, and Cys-143 together coordinate [4Fe-4S] cluster. Residues 196-197 (GE), Ser-228, 250-252 (SFH), and Asn-327 each bind S-adenosyl-L-methionine. Cys-370 acts as the S-methylcysteine intermediate in catalysis.

Belongs to the radical SAM superfamily. RlmN family. Requires [4Fe-4S] cluster as cofactor.

Its subcellular location is the cytoplasm. The enzyme catalyses adenosine(2503) in 23S rRNA + 2 reduced [2Fe-2S]-[ferredoxin] + 2 S-adenosyl-L-methionine = 2-methyladenosine(2503) in 23S rRNA + 5'-deoxyadenosine + L-methionine + 2 oxidized [2Fe-2S]-[ferredoxin] + S-adenosyl-L-homocysteine. It catalyses the reaction adenosine(37) in tRNA + 2 reduced [2Fe-2S]-[ferredoxin] + 2 S-adenosyl-L-methionine = 2-methyladenosine(37) in tRNA + 5'-deoxyadenosine + L-methionine + 2 oxidized [2Fe-2S]-[ferredoxin] + S-adenosyl-L-homocysteine. Its function is as follows. Specifically methylates position 2 of adenine 2503 in 23S rRNA and position 2 of adenine 37 in tRNAs. m2A2503 modification seems to play a crucial role in the proofreading step occurring at the peptidyl transferase center and thus would serve to optimize ribosomal fidelity. The chain is Dual-specificity RNA methyltransferase RlmN from Dinoroseobacter shibae (strain DSM 16493 / NCIMB 14021 / DFL 12).